The sequence spans 830 residues: Penicillin-binding protein 1A (830 aa).

Basic residues predominate over residues 1-17; sequence MTERKREHKDRKQKKNS. Residues 1–20 form a disordered region; that stretch reads MTERKREHKDRKQKKNSPKN. Residues 1–30 are Cytoplasmic-facing; sequence MTERKREHKDRKQKKNSPKNQSKVTKFLKW. A helical; Signal-anchor for type II membrane protein membrane pass occupies residues 31 to 51; that stretch reads FFIGILLLGITAVTVVGIYVL. The Extracellular segment spans residues 52-830; sequence SIIRSSPELD…QNGQNNNITQ (779 aa). Positions 72 to 244 are transglycosylase; the sequence is SILYDDQGNF…PTSYDGLSEA (173 aa). The Proton donor; for transglycosylase activity role is filled by glutamate 111. The tract at residues 378 to 663 is transpeptidase; that stretch reads ASATIIDYKT…TSPIFGKIMG (286 aa). Serine 417 serves as the catalytic Acyl-ester intermediate; for transpeptidase activity. The segment at 731–830 is disordered; that stretch reads APDTNDNNNS…QNGQNNNITQ (100 aa). Low complexity predominate over residues 735 to 746; it reads NDNNNSGANEGN. Residues 747–758 show a composition bias toward basic and acidic residues; it reads KQQETKPEEVKP. Composition is skewed to low complexity over residues 759-807 and 816-830; these read NENN…NTNN and GNNQ…NITQ.

It in the N-terminal section; belongs to the glycosyltransferase 51 family. In the C-terminal section; belongs to the transpeptidase family.

The protein localises to the cell membrane. The catalysed reaction is [GlcNAc-(1-&gt;4)-Mur2Ac(oyl-L-Ala-gamma-D-Glu-L-Lys-D-Ala-D-Ala)](n)-di-trans,octa-cis-undecaprenyl diphosphate + beta-D-GlcNAc-(1-&gt;4)-Mur2Ac(oyl-L-Ala-gamma-D-Glu-L-Lys-D-Ala-D-Ala)-di-trans,octa-cis-undecaprenyl diphosphate = [GlcNAc-(1-&gt;4)-Mur2Ac(oyl-L-Ala-gamma-D-Glu-L-Lys-D-Ala-D-Ala)](n+1)-di-trans,octa-cis-undecaprenyl diphosphate + di-trans,octa-cis-undecaprenyl diphosphate + H(+). It carries out the reaction Preferential cleavage: (Ac)2-L-Lys-D-Ala-|-D-Ala. Also transpeptidation of peptidyl-alanyl moieties that are N-acyl substituents of D-alanine.. The protein operates within cell wall biogenesis; peptidoglycan biosynthesis. In terms of biological role, cell wall formation. Synthesis of cross-linked peptidoglycan from the lipid intermediates. The enzyme has a penicillin-insensitive transglycosylase N-terminal domain (formation of linear glycan strands) and a penicillin-sensitive transpeptidase C-terminal domain (cross-linking of the peptide subunits). The protein is Penicillin-binding protein 1A (pbpA) of Clostridium perfringens (strain ATCC 13124 / DSM 756 / JCM 1290 / NCIMB 6125 / NCTC 8237 / Type A).